The sequence spans 186 residues: Alkyl hydroperoxide reductase AhpD (186 aa).

Cys-131 acts as the Proton donor in catalysis. A disulfide bridge connects residues Cys-131 and Cys-134. Cys-134 serves as the catalytic Cysteine sulfenic acid (-SOH) intermediate.

The protein belongs to the AhpD family.

It carries out the reaction N(6)-[(R)-dihydrolipoyl]-L-lysyl-[lipoyl-carrier protein] + a hydroperoxide = N(6)-[(R)-lipoyl]-L-lysyl-[lipoyl-carrier protein] + an alcohol + H2O. Antioxidant protein with alkyl hydroperoxidase activity. Required for the reduction of the AhpC active site cysteine residues and for the regeneration of the AhpC enzyme activity. The polypeptide is Alkyl hydroperoxide reductase AhpD (Rhodospirillum centenum (strain ATCC 51521 / SW)).